The primary structure comprises 364 residues: Dihydroorotate dehydrogenase (quinone) (364 aa).

FMN is bound by residues 62–66 (AGFDK) and threonine 86. Lysine 66 contacts substrate. Position 111 to 115 (111 to 115 (NRMGF)) interacts with substrate. FMN contacts are provided by asparagine 142 and asparagine 175. Substrate is bound at residue asparagine 175. Serine 178 acts as the Nucleophile in catalysis. Asparagine 180 contributes to the substrate binding site. Lysine 216 and threonine 244 together coordinate FMN. Substrate is bound at residue 245-246 (NT). Residues glycine 267, glycine 296, and 317–318 (YT) contribute to the FMN site.

Belongs to the dihydroorotate dehydrogenase family. Type 2 subfamily. Monomer. FMN is required as a cofactor.

It is found in the cell membrane. It catalyses the reaction (S)-dihydroorotate + a quinone = orotate + a quinol. It functions in the pathway pyrimidine metabolism; UMP biosynthesis via de novo pathway; orotate from (S)-dihydroorotate (quinone route): step 1/1. Catalyzes the conversion of dihydroorotate to orotate with quinone as electron acceptor. This Anaeromyxobacter dehalogenans (strain 2CP-C) protein is Dihydroorotate dehydrogenase (quinone).